Consider the following 254-residue polypeptide: Translation initiation factor 2 subunit alpha (254 aa).

The 72-residue stretch at 10–81 folds into the S1 motif domain; sequence GDLVVVKITE…ERKVVDLSLK (72 aa).

Belongs to the eIF-2-alpha family. Heterotrimer composed of an alpha, a beta and a gamma chain.

Functionally, eIF-2 functions in the early steps of protein synthesis by forming a ternary complex with GTP and initiator tRNA. The chain is Translation initiation factor 2 subunit alpha from Thermoplasma acidophilum (strain ATCC 25905 / DSM 1728 / JCM 9062 / NBRC 15155 / AMRC-C165).